The following is a 257-amino-acid chain: 3-oxo-5-alpha-steroid 4-dehydrogenase 1 (257 aa).

Transmembrane regions (helical) follow at residues 7–27 (FLLD…YVLL), 50–70 (AAWT…CAGA), 84–104 (ILLA…PFLI), 109–129 (PMPL…GYLQ), 149–169 (FLTG…SDHV), and 208–228 (ALAS…CVLF).

Belongs to the steroid 5-alpha reductase family.

It localises to the microsome membrane. The protein localises to the endoplasmic reticulum membrane. It carries out the reaction a 3-oxo-5alpha-steroid + NADP(+) = a 3-oxo-Delta(4)-steroid + NADPH + H(+). It catalyses the reaction 5alpha-pregnane-3,20-dione + NADP(+) = progesterone + NADPH + H(+). The catalysed reaction is 17beta-hydroxy-5alpha-androstan-3-one + NADP(+) = testosterone + NADPH + H(+). The enzyme catalyses androst-4-ene-3,17-dione + NADPH + H(+) = 5alpha-androstan-3,17-dione + NADP(+). Its function is as follows. Converts testosterone into 5-alpha-dihydrotestosterone and progesterone or corticosterone into their corresponding 5-alpha-3-oxosteroids. It plays a central role in sexual differentiation and androgen physiology. The protein is 3-oxo-5-alpha-steroid 4-dehydrogenase 1 (SRD5A1) of Bos taurus (Bovine).